Consider the following 152-residue polypeptide: Small ribosomal subunit protein uS15 (152 aa).

The segment covering 1-10 (MAKMHTRTKG) has biased composition (basic residues). The disordered stretch occupies residues 1-26 (MAKMHTRTKGKSGSTKPIRSESPAWS). A compositionally biased stretch (polar residues) spans 11 to 26 (KSGSTKPIRSESPAWS).

Belongs to the universal ribosomal protein uS15 family. As to quaternary structure, part of the 30S ribosomal subunit.

The chain is Small ribosomal subunit protein uS15 from Methanococcoides burtonii (strain DSM 6242 / NBRC 107633 / OCM 468 / ACE-M).